We begin with the raw amino-acid sequence, 456 residues long: Putative F-box/LRR-repeat protein At3g18150 (456 aa).

The region spanning 30 to 78 (VDSISSLPDVILQHILSFIPTKLAITTSLLSKRWRHVWCDTPSLSFNDY) is the F-box domain. 6 LRR repeats span residues 177–202 (TCLLSDESMANILFGCPILESLTLDH), 203–213 (CGGLRVLDLSK), 228–253 (VPELTAMQIVAPHTHCLRLRNSKLPC), 278–303 (KADFLQVTLLKMLEKLHNVEKLTLGG), 333–358 (IFQYVIPGIERVLQNSPDLKKLTLLT), and 396–422 (CLDVESEHVVSFVELMLKNTKALDKMV).

In Arabidopsis thaliana (Mouse-ear cress), this protein is Putative F-box/LRR-repeat protein At3g18150.